The following is a 197-amino-acid chain: Imidazoleglycerol-phosphate dehydratase (197 aa).

The protein belongs to the imidazoleglycerol-phosphate dehydratase family.

It is found in the cytoplasm. The catalysed reaction is D-erythro-1-(imidazol-4-yl)glycerol 3-phosphate = 3-(imidazol-4-yl)-2-oxopropyl phosphate + H2O. It participates in amino-acid biosynthesis; L-histidine biosynthesis; L-histidine from 5-phospho-alpha-D-ribose 1-diphosphate: step 6/9. In Marinomonas sp. (strain MWYL1), this protein is Imidazoleglycerol-phosphate dehydratase.